A 613-amino-acid chain; its full sequence is Carotenoid dioxygenase (613 aa).

The disordered stretch occupies residues 1–25; that stretch reads MSPHEVIGTVPKNSTTFRTQADEHD. Fe(2+) is bound by residues H261, H313, H383, and H595.

This sequence belongs to the carotenoid oxygenase family. Fe(2+) is required as a cofactor.

It is found in the cytoplasm. Its subcellular location is the cytosol. It carries out the reaction torulene + O2 = 4'-apo-beta-carotenal + 3-methyl-2-butenal. It functions in the pathway carotenoid biosynthesis. Its function is as follows. Torulene dioxygenase; part of pathway that mediates the biosynthesis of neurosporaxanthin, a carboxylic apocarotenoid acting as an essential protective pigments and leading to orange pigmentation. Cao-2 mediates the cleavage of torulene into beta-apo-4'-carotenal, the aldehyde corresponding to the acidic neurosporaxanthin. Is not able to use gamma-carotene (that it is not desaturated at the C4'-C5' bond) as substrate, which suggests a high specificity of cao-2 in cleaving the C4'-C5' double bond. Neurosporaxanthin is synthesized from geranyl-geranyl pyrophosphate (GGPP) through several enzymatic activities. Phytoene synthase activity performed by the bifunctional enzyme al-2 first produces phytoene from geranyl-geranyl pyrophosphate (GGPP). The phytoene dehydrogenase al-1 then introduces 5 desaturations to lead to 3,4-didehydrolycopene via the intermediates phytofluene, zeta-carotene, neurosporene and lycopene. Al-2 cyclase activity then converts 3,4-didehydrolycopene into torulene. Al-2 can also convet lycopene into gamma-carotene which in turn is converted to beta-carotene by an additional al-2 cyclization reaction. Torulene is the substrate of the dioxidase cao-2 that breaks the molecule, removing five carbon atoms to yield beta-apo-4'-carotenal, whereas the aldehyde dehydrogenase ylo-1 mediates the last step by converting beta-apo-4'-carotenal into neurosporaxanthin. The chain is Carotenoid dioxygenase from Neurospora crassa (strain ATCC 24698 / 74-OR23-1A / CBS 708.71 / DSM 1257 / FGSC 987).